The sequence spans 209 residues: MIKEFCAENLTLLPTLDAGQVSRVELCDNLAVGGTTPSYGVIKEACQLLHDKKISVATMIRPRGGDFVYNDLELKAMEEDILKAVEAGSDALVLGLLTTENQLDTDAIEQLLPATQGLPLVFHMAFDHIPTDHQHQALDQLIDYGFVRVLTHGSPEATPITDNVEQLKSLVTYANKRIEIMIGGGVTAENCQNLSQLTGTAIVHGTKII.

The protein resides in the cytoplasm. The polypeptide is PF03932 family protein CutC (Streptococcus pyogenes serotype M6 (strain ATCC BAA-946 / MGAS10394)).